The sequence spans 408 residues: MVQVNSNYLKLKAGYLFPEIARRIKSFSEANPDAALIRLGIGDVTEPLPLACRNAMKVAIDEMGTNTGFHGYGPEQGYDWLREAIAKHDFQNKGCQINAEEIFVSDGSKCDSSNILDILGSSNRIAVTDPVYPVYVDSNVMAGRTGEANQSGRYAGLSYLPINAENGFAAKIPSEPVDLIYLCFPNNPTGAVATRAQLQEWVNYARTNSVLILFDAAYEAFIQNPDLPHSIYEIEGARECAIEFRSFSKNAGFTGTRCAFTVVPKGLKGKSDDGSDVELWNLWNRRQSTKFNGVSYIIQRGAEAVYSAQGQGEINALVSFYMRNAAIIRRELTAAGIEVHGGEHAPYVWLKTPDDMDSWGFFDHLLHNANVVGTPGSGFGAAGEGYFRLSAFNSRVNVDEAMRRIRAL.

2 residues coordinate substrate: Tyr-15 and Gly-42. Residues Tyr-72, 108 to 109 (SK), Tyr-132, Asn-187, Tyr-218, and 246 to 248 (SFS) each bind pyridoxal 5'-phosphate. Substrate contacts are provided by Lys-109, Tyr-132, and Asn-187. Lys-249 carries the N6-(pyridoxal phosphate)lysine modification. Pyridoxal 5'-phosphate-binding residues include Arg-257 and Asn-292. Substrate is bound by residues Asn-292 and Arg-388.

Belongs to the class-I pyridoxal-phosphate-dependent aminotransferase family. LL-diaminopimelate aminotransferase subfamily. As to quaternary structure, homodimer. Pyridoxal 5'-phosphate is required as a cofactor.

It carries out the reaction (2S,6S)-2,6-diaminopimelate + 2-oxoglutarate = (S)-2,3,4,5-tetrahydrodipicolinate + L-glutamate + H2O + H(+). Its pathway is amino-acid biosynthesis; L-lysine biosynthesis via DAP pathway; LL-2,6-diaminopimelate from (S)-tetrahydrodipicolinate (aminotransferase route): step 1/1. Its function is as follows. Involved in the synthesis of meso-diaminopimelate (m-DAP or DL-DAP), required for both lysine and peptidoglycan biosynthesis. Catalyzes the direct conversion of tetrahydrodipicolinate to LL-diaminopimelate. The chain is LL-diaminopimelate aminotransferase from Prochlorococcus marinus (strain MIT 9303).